The sequence spans 393 residues: Lipoyl synthase, mitochondrial (393 aa).

[4Fe-4S] cluster is bound by residues Cys-111, Cys-116, Cys-122, Cys-142, Cys-146, Cys-149, and Ser-357. The region spanning 127–346 is the Radical SAM core domain; that stretch reads EHGTQTATIM…ETRGNELGFL (220 aa).

Belongs to the radical SAM superfamily. Lipoyl synthase family. [4Fe-4S] cluster serves as cofactor.

It localises to the mitochondrion. It catalyses the reaction [[Fe-S] cluster scaffold protein carrying a second [4Fe-4S](2+) cluster] + N(6)-octanoyl-L-lysyl-[protein] + 2 oxidized [2Fe-2S]-[ferredoxin] + 2 S-adenosyl-L-methionine + 4 H(+) = [[Fe-S] cluster scaffold protein] + N(6)-[(R)-dihydrolipoyl]-L-lysyl-[protein] + 4 Fe(3+) + 2 hydrogen sulfide + 2 5'-deoxyadenosine + 2 L-methionine + 2 reduced [2Fe-2S]-[ferredoxin]. Its pathway is protein modification; protein lipoylation via endogenous pathway; protein N(6)-(lipoyl)lysine from octanoyl-[acyl-carrier-protein]: step 2/2. In terms of biological role, catalyzes the radical-mediated insertion of two sulfur atoms into the C-6 and C-8 positions of the octanoyl moiety bound to the lipoyl domains of lipoate-dependent enzymes, thereby converting the octanoylated domains into lipoylated derivatives. The chain is Lipoyl synthase, mitochondrial from Aedes aegypti (Yellowfever mosquito).